We begin with the raw amino-acid sequence, 226 residues long: MMIHIPKVLTPEQVARCRAVMDAAGWVDGRSTAGAQAVHVKKNLQLPDGSAEARELGEMVRAALQRSALFTSAVLPRRILPPMFNRYDAGMTFGSHVDNAIRFVRDSGEPLRTDVSTTLFLSEPDEYEGGELVVEDTYGAHKVKLPAGDAIVYPATSLHHVTPITRGSRVASFFWTQSLIRDAGQRALLFDMDMAIMRLNQDHPGHISAVQLTGVYHNLLRQWAEV.

Residues 78-178 form the Fe2OG dioxygenase domain; sequence RILPPMFNRY…RVASFFWTQS (101 aa). The Fe cation site is built by histidine 96, aspartate 98, and histidine 159. Position 169 (arginine 169) interacts with 2-oxoglutarate.

It depends on Fe(2+) as a cofactor. Requires L-ascorbate as cofactor.

This Azorhizobium caulinodans (strain ATCC 43989 / DSM 5975 / JCM 20966 / LMG 6465 / NBRC 14845 / NCIMB 13405 / ORS 571) protein is PKHD-type hydroxylase AZC_3753.